The primary structure comprises 153 residues: LOB domain-containing protein 26 (153 aa).

An LOB domain is found at 4 to 105 (NPCEVCRFQN…EEVSKTKKLL (102 aa)). The segment at 126–153 (KSKPSVLRKRKRKTKSSDESAIRVVEDS) is disordered. Residues 140–153 (KSSDESAIRVVEDS) are compositionally biased toward basic and acidic residues.

The protein belongs to the LOB domain-containing protein family.

This is LOB domain-containing protein 26 (LBD26) from Arabidopsis thaliana (Mouse-ear cress).